The primary structure comprises 382 residues: Chaperone protein DnaJ (382 aa).

Positions 5 to 70 (DYYEVLGVSR…DKKAAYDRYG (66 aa)) constitute a J domain. The CR-type zinc finger occupies 141–219 (GVQKTINVPA…CHGAGRVEKE (79 aa)). Cysteine 154, cysteine 157, cysteine 171, cysteine 174, cysteine 193, cysteine 196, cysteine 207, and cysteine 210 together coordinate Zn(2+). CXXCXGXG motif repeat units follow at residues 154 to 161 (CDSCKGTG), 171 to 178 (CPTCSGMG), 193 to 200 (CPTCNGMG), and 207 to 214 (CKSCHGAG).

The protein belongs to the DnaJ family. In terms of assembly, homodimer. Zn(2+) serves as cofactor.

It is found in the cytoplasm. In terms of biological role, participates actively in the response to hyperosmotic and heat shock by preventing the aggregation of stress-denatured proteins and by disaggregating proteins, also in an autonomous, DnaK-independent fashion. Unfolded proteins bind initially to DnaJ; upon interaction with the DnaJ-bound protein, DnaK hydrolyzes its bound ATP, resulting in the formation of a stable complex. GrpE releases ADP from DnaK; ATP binding to DnaK triggers the release of the substrate protein, thus completing the reaction cycle. Several rounds of ATP-dependent interactions between DnaJ, DnaK and GrpE are required for fully efficient folding. Also involved, together with DnaK and GrpE, in the DNA replication of plasmids through activation of initiation proteins. The polypeptide is Chaperone protein DnaJ (Cereibacter sphaeroides (strain ATCC 17025 / ATH 2.4.3) (Rhodobacter sphaeroides)).